The chain runs to 570 residues: KH homology domain-containing protein 4 (570 aa).

Residues Met1–Pro29 are disordered. KH domains are found at residues Asp77 to Glu157 and Val210 to Gln292. A compositionally biased stretch (pro residues) spans Pro391–Pro407. Disordered regions lie at residues Pro391–Arg410, Ala438–Val500, and Gly512–Pro570. A required for nuclear retention region spans residues Gln427–Glu497. Residues Thr553 to Gln562 show a composition bias toward low complexity.

It belongs to the KHDC4 family. Interacts with PRPF19.

It localises to the nucleus. It is found in the cytoplasm. Functionally, RNA-binding protein involved in pre-mRNA splicing. Interacts with the PRP19C/Prp19 complex/NTC/Nineteen complex which is part of the spliceosome. Involved in regulating splice site selection. Binds preferentially RNA with A/C rich sequences and poly-C stretches. The polypeptide is KH homology domain-containing protein 4 (khdc4) (Danio rerio (Zebrafish)).